The following is a 179-amino-acid chain: Alpha-S2-casein-like A (179 aa).

Residues 1–15 form the signal peptide; sequence MKFFIFTCLVAAALA. Phosphoserine is present on residues Ser24 and Ser25. A disordered region spans residues 44–121; that stretch reads FQTPQDSASS…NAIYDVPSQE (78 aa). The span at 63-74 shows a compositional bias: basic and acidic residues; that stretch reads ISEKIEQSEEQK. Residues 93–110 are compositionally biased toward polar residues; it reads PQICTPYQQQSSVNQRPQ.

This sequence belongs to the alpha-casein family. In terms of tissue distribution, mammary gland specific. Secreted in milk.

Its subcellular location is the secreted. Its function is as follows. Important role in the capacity of milk to transport calcium phosphate. The chain is Alpha-S2-casein-like A (Csn1s2a) from Rattus norvegicus (Rat).